Consider the following 516-residue polypeptide: Probable 2-isopropylmalate synthase (516 aa).

Positions 20–271 constitute a Pyruvate carboxyltransferase domain; it reads VTVFDTTLRD…KTNIRTEYLV (252 aa).

Belongs to the alpha-IPM synthase/homocitrate synthase family.

It carries out the reaction 3-methyl-2-oxobutanoate + acetyl-CoA + H2O = (2S)-2-isopropylmalate + CoA + H(+). Its pathway is amino-acid biosynthesis; L-leucine biosynthesis; L-leucine from 3-methyl-2-oxobutanoate: step 1/4. Functionally, catalyzes the condensation of the acetyl group of acetyl-CoA with 3-methyl-2-oxobutanoate (2-oxoisovalerate) to form 3-carboxy-3-hydroxy-4-methylpentanoate (2-isopropylmalate). The chain is Probable 2-isopropylmalate synthase (leuA) from Methanosarcina mazei (strain ATCC BAA-159 / DSM 3647 / Goe1 / Go1 / JCM 11833 / OCM 88) (Methanosarcina frisia).